Here is a 1325-residue protein sequence, read N- to C-terminus: SCAN domain-containing protein 3 (1325 aa).

The region spanning 52-134 (RQRFRQFCYQ…TLLEDLEREL (83 aa)) is the SCAN box domain. Residues 246–275 (KAKYCQLIKEVKEAKAKAKKESVDYRRLAR) adopt a coiled-coil conformation. Positions 366–526 (KSIKEVSSRC…TPCESAFSSE (161 aa)) constitute an Integrase catalytic domain. Positions 542–568 (ASLHTENELDQADKELENTLRAQYEEN) form a coiled coil.

As to expression, weakly expressed in the lung (at protein level).

Its subcellular location is the nucleus. In Homo sapiens (Human), this protein is SCAN domain-containing protein 3.